A 330-amino-acid polypeptide reads, in one-letter code: Aspartate--ammonia ligase (330 aa).

Belongs to the class-II aminoacyl-tRNA synthetase family. AsnA subfamily.

Its subcellular location is the cytoplasm. The enzyme catalyses L-aspartate + NH4(+) + ATP = L-asparagine + AMP + diphosphate + H(+). It functions in the pathway amino-acid biosynthesis; L-asparagine biosynthesis; L-asparagine from L-aspartate (ammonia route): step 1/1. The protein is Aspartate--ammonia ligase of Histophilus somni (strain 2336) (Haemophilus somnus).